The sequence spans 204 residues: Molybdenum cofactor guanylyltransferase (204 aa).

Residues 12-14 (LAG), K25, N53, D71, and D101 contribute to the GTP site. D101 lines the Mg(2+) pocket.

The protein belongs to the MobA family. As to quaternary structure, monomer. Mg(2+) is required as a cofactor.

The protein localises to the cytoplasm. It catalyses the reaction Mo-molybdopterin + GTP + H(+) = Mo-molybdopterin guanine dinucleotide + diphosphate. In terms of biological role, transfers a GMP moiety from GTP to Mo-molybdopterin (Mo-MPT) cofactor (Moco or molybdenum cofactor) to form Mo-molybdopterin guanine dinucleotide (Mo-MGD) cofactor. The sequence is that of Molybdenum cofactor guanylyltransferase from Ralstonia pickettii (strain 12J).